We begin with the raw amino-acid sequence, 532 residues long: Ankyrin repeat-containing protein At2g01680 (532 aa).

7 ANK repeats span residues 9–38 (LTHQ…GDEL), 58–89 (AGET…TVKI), 93–122 (SDMN…ELCR), 127–156 (SNTS…SCAM), 161–190 (NGKT…AIVG), 195–224 (KGQT…TILN), and 229–259 (KGNT…EVNA). A run of 4 helical transmembrane segments spans residues 354-374 (ITVV…NLPG), 396-416 (VFCL…VVQI), 436-456 (LMWA…FAVV), and 467-487 (ITLL…YFVF).

Its subcellular location is the membrane. The sequence is that of Ankyrin repeat-containing protein At2g01680 from Arabidopsis thaliana (Mouse-ear cress).